The following is a 431-amino-acid chain: Enolase (431 aa).

Q163 provides a ligand contact to (2R)-2-phosphoglycerate. The active-site Proton donor is the E205. Positions 242, 288, and 315 each coordinate Mg(2+). Positions 340, 369, 370, and 391 each coordinate (2R)-2-phosphoglycerate. The Proton acceptor role is filled by K340.

Belongs to the enolase family. Mg(2+) serves as cofactor.

The protein resides in the cytoplasm. It localises to the secreted. It is found in the cell surface. The enzyme catalyses (2R)-2-phosphoglycerate = phosphoenolpyruvate + H2O. Its pathway is carbohydrate degradation; glycolysis; pyruvate from D-glyceraldehyde 3-phosphate: step 4/5. Catalyzes the reversible conversion of 2-phosphoglycerate (2-PG) into phosphoenolpyruvate (PEP). It is essential for the degradation of carbohydrates via glycolysis. In Trichlorobacter lovleyi (strain ATCC BAA-1151 / DSM 17278 / SZ) (Geobacter lovleyi), this protein is Enolase.